Here is a 61-residue protein sequence, read N- to C-terminus: Metallothionein-2E (61 aa).

Position 1 is an N-acetylmethionine (methionine 1). Positions 1 to 29 (MDPNCSCATRDSCACASSCKCKECKCTSC) are beta. A divalent metal cation-binding residues include cysteine 5, cysteine 7, cysteine 13, cysteine 15, cysteine 19, cysteine 21, cysteine 24, cysteine 26, cysteine 29, cysteine 33, cysteine 34, cysteine 36, cysteine 37, cysteine 41, cysteine 44, cysteine 48, cysteine 50, cysteine 57, cysteine 59, and cysteine 60. An alpha region spans residues 30–61 (KKSCCSCCPAGCTKCAQGCICKGALDKCSCCA).

The protein belongs to the metallothionein superfamily. Type 1 family. As to quaternary structure, monomer.

Functionally, metallothioneins have a high content of cysteine residues that bind various heavy metals; these proteins are transcriptionally regulated by both heavy metals and glucocorticoids. This Oryctolagus cuniculus (Rabbit) protein is Metallothionein-2E.